Consider the following 262-residue polypeptide: Putative protein-methionine-sulfoxide reductase subunit YedZ1 (262 aa).

This sequence belongs to the MsrP family.

In terms of biological role, part of the YedY1-YedZ1 system that may repair oxidized proteins containing methionine sulfoxide residues (Met-O). The polypeptide is Putative protein-methionine-sulfoxide reductase subunit YedZ1 (Azospira oryzae (strain ATCC BAA-33 / DSM 13638 / PS) (Dechlorosoma suillum)).